The primary structure comprises 387 residues: MKAITLLGSTGSIGTQTLDIVAQYPDQFRIVGLAAGRSLDKLIPQIRQFRPQIVALADEQQLDDLKAAIADLDPQPILVAGPAGVCEVAAYGDAKTVVTGIVGCAGLLPTIAAIKAGKDIALANKETLIAGGPVVLPLVEQYGVKLLPADSEHSAIFQCLQGVPAGGLRRILLTASGGAFRDWPVDKLGQVTIADALKHPNWSMGQKITVDSATLMNKGLEVIEAHYLFGLDYDHIEIIIHPQSIIHSLIEVQDTSVLAQLGWPDMRLPVLYAMSWPERIATDWPRLDLLKAGDLTFKEPDHAKYPCMKLAYAVGRAGGAMPAVLNAANEQAVALFLAERIAFLDIPRLIEQTCDRFSSKNCAEPSLEDILAADQWARQEVLLASQN.

T10, G11, S12, I13, G36, R37, and N124 together coordinate NADPH. Position 125 (K125) interacts with 1-deoxy-D-xylulose 5-phosphate. E126 contacts NADPH. Mn(2+) is bound at residue D150. Residues S151, E152, S176, and H199 each coordinate 1-deoxy-D-xylulose 5-phosphate. Position 152 (E152) interacts with Mn(2+). Residue G205 participates in NADPH binding. S212, N217, K218, and E221 together coordinate 1-deoxy-D-xylulose 5-phosphate. E221 provides a ligand contact to Mn(2+).

Belongs to the DXR family. Mg(2+) is required as a cofactor. The cofactor is Mn(2+).

It carries out the reaction 2-C-methyl-D-erythritol 4-phosphate + NADP(+) = 1-deoxy-D-xylulose 5-phosphate + NADPH + H(+). Its pathway is isoprenoid biosynthesis; isopentenyl diphosphate biosynthesis via DXP pathway; isopentenyl diphosphate from 1-deoxy-D-xylulose 5-phosphate: step 1/6. Catalyzes the NADPH-dependent rearrangement and reduction of 1-deoxy-D-xylulose-5-phosphate (DXP) to 2-C-methyl-D-erythritol 4-phosphate (MEP). The polypeptide is 1-deoxy-D-xylulose 5-phosphate reductoisomerase (Cyanothece sp. (strain PCC 7425 / ATCC 29141)).